Consider the following 1268-residue polypeptide: Vigilin (1268 aa).

N-acetylserine is present on serine 2. A Phosphothreonine modification is found at threonine 8. 3 positions are modified to phosphoserine: serine 11, serine 31, and serine 35. KH domains lie at 158 to 229 (PKEH…RLEV), 230 to 302 (EKAF…AVEV), 303 to 371 (KKSQ…SVAA), 372 to 442 (PSWL…EINI), 443 to 514 (DHKF…DLII), 515 to 588 (EQRF…SVPI), 589 to 660 (FKQF…EVSI), 661 to 734 (PAKL…DIRA), 735 to 807 (KPEY…SMLV), 808 to 880 (DPKH…ECAI), 881 to 979 (PQKF…EVEV), 980 to 1059 (PFDL…SVTV), 1060 to 1134 (DPKY…DVPL), and 1135 to 1209 (DHRV…ALQV). Phosphothreonine occurs at positions 295 and 296. The residue at position 317 (serine 317) is a Phosphoserine. Position 437 is a phosphotyrosine (tyrosine 437). Residue serine 645 is modified to Phosphoserine. Residues 914-944 (ENAVHSTEPVVQENGDEAGEGREAKDCDPGS) are disordered. The segment covering 932–944 (GEGREAKDCDPGS) has biased composition (basic and acidic residues). At lysine 991 the chain carries N6-acetyllysine. Positions 1233 to 1268 (WTASSSEKAPDMSSSEEFPSFGAQVAPKTLPWGPKR) are disordered. Polar residues predominate over residues 1234–1249 (TASSSEKAPDMSSSEE). Phosphoserine is present on residues serine 1247 and serine 1252.

It is found in the cytoplasm. The protein resides in the nucleus. In terms of biological role, appears to play a role in cell sterol metabolism. It may function to protect cells from over-accumulation of cholesterol. In Homo sapiens (Human), this protein is Vigilin (HDLBP).